The sequence spans 199 residues: Recombination protein RecR (199 aa).

A C4-type zinc finger spans residues Cys-58–Cys-73. The 95-residue stretch at Asn-81–Pro-175 folds into the Toprim domain.

Belongs to the RecR family.

Its function is as follows. May play a role in DNA repair. It seems to be involved in an RecBC-independent recombinational process of DNA repair. It may act with RecF and RecO. The protein is Recombination protein RecR of Prochlorococcus marinus (strain MIT 9515).